A 127-amino-acid polypeptide reads, in one-letter code: Glycine cleavage system H protein (127 aa).

The 83-residue stretch at 22 to 104 (KVRIGITDFA…YEKAWMIVVE (83 aa)) folds into the Lipoyl-binding domain. Position 63 is an N6-lipoyllysine (Lys63).

The protein belongs to the GcvH family. The glycine cleavage system is composed of four proteins: P, T, L and H. (R)-lipoate is required as a cofactor.

Its function is as follows. The glycine cleavage system catalyzes the degradation of glycine. The H protein shuttles the methylamine group of glycine from the P protein to the T protein. Is also involved in protein lipoylation via its role as an octanoyl/lipoyl carrier protein intermediate. The polypeptide is Glycine cleavage system H protein (Geobacillus sp. (strain WCH70)).